The chain runs to 235 residues: Photosystem I assembly protein Ycf4 (235 aa).

2 helical membrane-spanning segments follow: residues asparagine 21–tyrosine 43 and glycine 63–leucine 85.

It belongs to the Ycf4 family.

Its subcellular location is the plastid. The protein localises to the chloroplast thylakoid membrane. Its function is as follows. Seems to be required for the assembly of the photosystem I complex. The protein is Photosystem I assembly protein Ycf4 of Amborella trichopoda.